The sequence spans 255 residues: Superoxide dismutase [Fe] 2, chloroplastic (255 aa).

A chloroplast-targeting transit peptide spans 1 to 32 (MAAFASALRVLPSPPAAVPRRLRSREQRQGCR). Histidine 67, histidine 119, aspartate 203, and histidine 207 together coordinate Fe cation.

Belongs to the iron/manganese superoxide dismutase family. As to quaternary structure, homodimer. Fe cation serves as cofactor. In terms of tissue distribution, strongly expressed in the stems of the young seedlings, etiolated seedlings and embryogenic calli, but only minimally expressed in the leaves and the roots.

Its subcellular location is the plastid. The protein localises to the chloroplast. It catalyses the reaction 2 superoxide + 2 H(+) = H2O2 + O2. Functionally, destroys superoxide anion radicals which are normally produced within the cells and which are toxic to biological systems. This Oryza sativa subsp. japonica (Rice) protein is Superoxide dismutase [Fe] 2, chloroplastic.